The primary structure comprises 158 residues: NAD(P)H-quinone oxidoreductase subunit N (158 aa).

This sequence belongs to the complex I NdhN subunit family. As to quaternary structure, NDH-1 can be composed of about 15 different subunits; different subcomplexes with different compositions have been identified which probably have different functions.

The protein resides in the cellular thylakoid membrane. It catalyses the reaction a plastoquinone + NADH + (n+1) H(+)(in) = a plastoquinol + NAD(+) + n H(+)(out). The enzyme catalyses a plastoquinone + NADPH + (n+1) H(+)(in) = a plastoquinol + NADP(+) + n H(+)(out). Its function is as follows. NDH-1 shuttles electrons from an unknown electron donor, via FMN and iron-sulfur (Fe-S) centers, to quinones in the respiratory and/or the photosynthetic chain. The immediate electron acceptor for the enzyme in this species is believed to be plastoquinone. Couples the redox reaction to proton translocation, and thus conserves the redox energy in a proton gradient. Cyanobacterial NDH-1 also plays a role in inorganic carbon-concentration. The chain is NAD(P)H-quinone oxidoreductase subunit N from Synechococcus elongatus (strain ATCC 33912 / PCC 7942 / FACHB-805) (Anacystis nidulans R2).